Consider the following 524-residue polypeptide: L-lactate permease (524 aa).

A run of 13 helical transmembrane segments spans residues 12–34, 38–60, 67–89, 127–149, 156–178, 193–215, 224–246, 250–267, 297–319, 339–361, 374–396, 411–433, and 505–522; these read LAVSAFVAAIPILLLLLCLTVFK, IQAALLTLLVTFFIAGLVFHLPF, IVQGVVQGLWPIGYIIVMAVWLY, LEGAAGFGVPIAICAVLLVSLGF, MLCLIANGASGAFGAIGIPVGII, SMMTALTLPMINFTIPFLLIWLM, ILPAILVTSSVYTVSQALITIFI, LADIIPSLLTMGLLALFL, WSPFYLLTMFVFLWSLPAFKGLL, IEVGVDFIGATGTAILLAAVTTV, SLLKKVIVDFSIPIMMICAIIGI, EAVATTGAFFPFLSPILGWIGVF, and YSFGLLVFVSVWTYILSL.

This sequence belongs to the lactate permease family.

It localises to the cell membrane. Functionally, may play a role in L-lactate transport. The polypeptide is L-lactate permease (lctP) (Halalkalibacterium halodurans (strain ATCC BAA-125 / DSM 18197 / FERM 7344 / JCM 9153 / C-125) (Bacillus halodurans)).